The chain runs to 69 residues: Cytoinsectotoxin-2a (69 aa).

It belongs to the cationic peptide 06 (cytoinsectotoxin) family. Expressed by the venom gland.

The protein resides in the secreted. In terms of biological role, insecticidal and antimicrobial peptide. Has insecticidal activity against larvae of flesh fly S.carnaria. Has antibacterial activity against Gram-positive bacterium B.subtilis B-501 (MIC=1.25 uM) and Gram-negative bacterium E.coli DH5alpha (MIC=2.5 uM). This Lachesana tarabaevi (Spider) protein is Cytoinsectotoxin-2a.